The chain runs to 492 residues: MASIDNESIIKSVPQKGFFGHPRGLFTLFFTEFWERFSYYGMRAILLYYLYTETVNGGLGFDKGTAVAIMSIYGSLVYMSTIIGGWLADRVFGTANTVFYGGIFIMFGHIALAYPGSSIAFYISMVLIIVGTGLLKPNVSSVVGDLYTKEDPRRDSGFSIFYMGINLGGLLAPLIVGTLGQKYNYHLGFGAAAVGMLLGLIVFALTRKKNLGLAGSNVPNPLSKKSAIGTGIGVIIVAIAVIISVQTGVLTIKRFIDLVSILGILIPVIYFIIMFTSKKADKTEKSRLAAYVPLFIGAVMFWAIQEQGATILAVYADERIRLSLGGFELQSSWFQSLNPLFVVIFAPIFAWLWMKLGKRQPSTPVKFSIGIILAGLSFIIMVFPAMQGKEALVSPLWLVLSFLLVVLGELCLSPVGLSVTTKLAPAAFSAQTMSMWFLTNAAAQAINAQVAGLFDKIPETMYFGTIGLISIVLGGILLLLSPVIKRAMKGVL.

13 consecutive transmembrane segments (helical) span residues 67 to 87 (VAIM…GGWL), 88 to 108 (ADRV…IMFG), 110 to 130 (IALA…LIIV), 157 to 177 (GFSI…LIVG), 185 to 205 (YHLG…VFAL), 232 to 252 (IGVI…VLTI), 255 to 275 (FIDL…IIMF), 294 to 314 (LFIG…ILAV), 333 to 353 (WFQS…AWLW), 367 to 387 (FSIG…PAMQ), 392 to 412 (LVSP…ELCL), 434 to 454 (SMWF…AGLF), and 464 to 484 (GTIG…SPVI).

This sequence belongs to the major facilitator superfamily. Proton-dependent oligopeptide transporter (POT/PTR) (TC 2.A.17) family.

It is found in the cell membrane. This is an uncharacterized protein from Bacillus subtilis (strain 168).